The chain runs to 185 residues: Ribosome-recycling factor (185 aa).

The protein belongs to the RRF family.

Its subcellular location is the cytoplasm. Functionally, responsible for the release of ribosomes from messenger RNA at the termination of protein biosynthesis. May increase the efficiency of translation by recycling ribosomes from one round of translation to another. In Francisella tularensis subsp. holarctica (strain FTNF002-00 / FTA), this protein is Ribosome-recycling factor.